The sequence spans 66 residues: Large ribosomal subunit protein bL33c (66 aa).

This sequence belongs to the bacterial ribosomal protein bL33 family.

It localises to the plastid. The protein resides in the chloroplast. The chain is Large ribosomal subunit protein bL33c from Citrus sinensis (Sweet orange).